Consider the following 514-residue polypeptide: 1-pyrroline-5-carboxylate dehydrogenase (514 aa).

Residues E286 and C320 contribute to the active site.

The protein belongs to the aldehyde dehydrogenase family. RocA subfamily.

The enzyme catalyses L-glutamate 5-semialdehyde + NAD(+) + H2O = L-glutamate + NADH + 2 H(+). It functions in the pathway amino-acid degradation; L-proline degradation into L-glutamate; L-glutamate from L-proline: step 2/2. The chain is 1-pyrroline-5-carboxylate dehydrogenase from Staphylococcus saprophyticus subsp. saprophyticus (strain ATCC 15305 / DSM 20229 / NCIMB 8711 / NCTC 7292 / S-41).